The primary structure comprises 467 residues: Hydroxyacid-oxoacid transhydrogenase, mitochondrial (467 aa).

Lysine 445 bears the N6-acetyllysine mark. Residue serine 452 is modified to Phosphoserine.

It belongs to the iron-containing alcohol dehydrogenase family. Hydroxyacid-oxoacid transhydrogenase subfamily. In terms of tissue distribution, expressed in kidney and liver.

It is found in the mitochondrion. The catalysed reaction is (S)-3-hydroxybutanoate + 2-oxoglutarate = (R)-2-hydroxyglutarate + acetoacetate. It carries out the reaction 4-hydroxybutanoate + 2-oxoglutarate = (R)-2-hydroxyglutarate + succinate semialdehyde. Its function is as follows. Catalyzes the cofactor-independent reversible oxidation of gamma-hydroxybutyrate (GHB) to succinic semialdehyde (SSA) coupled to reduction of 2-ketoglutarate (2-KG) to D-2-hydroxyglutarate (D-2-HG). L-3-hydroxybutyrate (L-3-OHB) is also a substrate for HOT when using 2-KG as hydrogen acceptor, resulting in the formation of D-2-HG. In Rattus norvegicus (Rat), this protein is Hydroxyacid-oxoacid transhydrogenase, mitochondrial (Adhfe1).